A 174-amino-acid chain; its full sequence is Eukaryotic translation elongation factor 1 epsilon-1 (174 aa).

N-acetylalanine is present on A2. An N-terminal region spans residues 2–56 (AAAAELSLLEKSLGLSKGNKYSAQGERQIPVLQTNNGPSLTGLTTIAAHLVKQAN). The 124-residue stretch at 50 to 173 (HLVKQANKEY…FIKNRLYTNS (124 aa)) folds into the GST C-terminal domain. Residues 57–63 (KEYLLGS) form a linker region. The segment at 64 to 152 (TAEEKAIVQQ…SRWFCHIQHY (89 aa)) is C-terminal. K138 carries the post-translational modification N6-acetyllysine. Positions 153-169 (PGIRQHLSSVVFIKNRL) form a coiled coil.

As to quaternary structure, part of a multisubunit complex that groups tRNA ligases for Arg (RARS1), Asp (DARS1), Gln (QARS1), Ile (IARS1), Leu (LARS1), Lys (KARS1), Met (MARS1) the bifunctional ligase for Glu and Pro (EPRS1) and the auxiliary subunits AIMP1/p43, AIMP2/p38 and EEF1E1/p18. Can interact simultaneously with MARS1 and EPRS1. Forms a linear complex that contains MARS1, EEF1E1, EPRS1 and AIMP2 that is at the core of the multisubunit complex. Interacts with ATM and ATR. The interaction with ATM, which takes place independently of TP53, is induced by DNA damage that may occur during genotoxic stress or cell growth. The interaction with ATR is enhanced by UV irradiation. In terms of tissue distribution, down-regulated in various cancer tissues.

The protein resides in the cytoplasm. It localises to the cytosol. It is found in the nucleus. In terms of biological role, positive modulator of ATM response to DNA damage. The sequence is that of Eukaryotic translation elongation factor 1 epsilon-1 (EEF1E1) from Homo sapiens (Human).